Consider the following 805-residue polypeptide: Na(+)/H(+) antiporter subunit A (805 aa).

The next 21 helical transmembrane spans lie at 4-22 (LHWATISPFLLAILIPFLY), 29-51 (HTGWFVLVLPLVLFIYFIQYLSI), 80-102 (SLLFALLITGIGTLVILYSIFYL), 109-128 (LNNFYVYLLMFMGAMLGVVL), 132-154 (LIVLYVFWELTSLASSLLISYWF), 167-189 (MLITVFGGFAMLGGFSLLYVMTG), 209-231 (FLPAMILVLLGAFTKSAQFPFHI), 244-266 (SAYLHSATMVKAGIYLVARLTPV), 271-293 (AEWFWLLTGFGVVTLLWGSTSAV), 300-322 (GILAFSTVSQLGLIMTLLGLGSA), 332-354 (PAFYSFAIMAAIFHLINHATFKG), 375-397 (LGGLMAIMPVTFTVSLIGLASMA), 431-453 (IIIVVLAWIASVFTFLYCLIMFF), 474-496 (IGMLISPVILGSLVIVFGFFPNI), 529-551 (GFNAELFMTMGVVAAGIILFLMM), 597-614 (YFAYMIVFMILLLGYTMF), 629-651 (IAPYIWVITIVFIVATLSIPFIN), 656-674 (AVVVVGVIGFLLALLFVVF), 679-701 (LALTQLLIETVTVLLLMLAFYHL), 714-736 (NVLNLIISIGVGFFITAIALSSL), and 778-795 (MLEVLVLGIAALGVIALI).

It belongs to the CPA3 antiporters (TC 2.A.63) subunit A family. Forms a heterooligomeric complex that consists of seven subunits: MrpA, MrpB, MrpC, MrpD, MrpE, MrpF and MrpG.

It localises to the cell membrane. In terms of biological role, mnh complex is a Na(+)Li(+)/H(+) antiporter involved in Na(+) and/or Li(+) excretion and Na(+) resistance. Na(+)/H(+) antiport consumes a transmembrane electrical potential, and is thus inferred to be electrogenic. Does not transport K(+), Ca(2+) or Mg(2+). The polypeptide is Na(+)/H(+) antiporter subunit A (mrpA) (Alkalihalophilus pseudofirmus (strain ATCC BAA-2126 / JCM 17055 / OF4) (Bacillus pseudofirmus)).